The following is a 138-amino-acid chain: MSTLSYVSPDALKGWLMESPNEISIIDVRDYDYEGERIPGSVRIPSDTFLASVDQHVDDLMKKRSLIVHCTYSQVRGPKAARVLSEILRNRITESKEKLSLSQKEKLFQNLPTVYILHGGFSAWKRRYGGQQGLIEYD.

The Rhodanese domain occupies 19–133 (SPNEISIIDV…WKRRYGGQQG (115 aa)). Cys-70 acts as the Phosphocysteine intermediate in catalysis.

Belongs to the MPI phosphatase family.

The protein localises to the cytoplasm. Its subcellular location is the nucleus. It carries out the reaction O-phospho-L-tyrosyl-[protein] + H2O = L-tyrosyl-[protein] + phosphate. In terms of biological role, may play a role in DNA replication checkpoint via regulation of hsk1 or may act downstream of hsk1 in an S phase regulatory pathway. The sequence is that of Dual specificity phosphatase ibp1 (ibp1) from Schizosaccharomyces pombe (strain 972 / ATCC 24843) (Fission yeast).